A 274-amino-acid chain; its full sequence is Cytochrome b-c1 complex subunit Rieske, mitochondrial (274 aa).

The Mitochondrial matrix portion of the chain corresponds to 79-103; that stretch reads SHTDIKVPDFSDYRRPEVLDSTKSS. A helical transmembrane segment spans residues 104-140; it reads KESSEARKGFSYLVTATTTVGVAYAAKNVVSQFVSSM. The Mitochondrial intermembrane segment spans residues 141-274; sequence SASADVLAMS…FTSDDMVIVG (134 aa). Residues 187-272 enclose the Rieske domain; sequence EAAVEVSQLR…YEFTSDDMVI (86 aa). Positions 217, 219, 236, 239, and 241 each coordinate [2Fe-2S] cluster. Cys222 and Cys238 are joined by a disulfide.

The protein belongs to the Rieske iron-sulfur protein family. Component of the ubiquinol-cytochrome c oxidoreductase (cytochrome b-c1 complex, complex III, CIII), a multisubunit enzyme composed of 11 subunits. The complex is composed of 3 respiratory subunits cytochrome b, cytochrome c1 and Rieske protein UQCRFS1, 2 core protein subunits UQCRC1/QCR1 and UQCRC2/QCR2, and 6 low-molecular weight protein subunits UQCRH/QCR6, UQCRB/QCR7, UQCRQ/QCR8, UQCR10/QCR9, UQCR11/QCR10 and subunit 9, the cleavage product of Rieske protein UQCRFS1. The complex exists as an obligatory dimer and forms supercomplexes (SCs) in the inner mitochondrial membrane with NADH-ubiquinone oxidoreductase (complex I, CI) and cytochrome c oxidase (complex IV, CIV), resulting in different assemblies (supercomplex SCI(1)III(2)IV(1) and megacomplex MCI(2)III(2)IV(2)). Incorporation of the Rieske protein UQCRFS1 is the penultimate step in complex III assembly. Interacts with TTC19, which is involved in the clearance of UQCRFS1 fragments. In terms of assembly, component of the ubiquinol-cytochrome c oxidoreductase (cytochrome b-c1 complex, complex III, CIII). Subunit 9 corresponds to the mitochondrial targeting sequence (MTS) of Rieske protein UQCRFS1. It is retained after processing and incorporated inside complex III, where it remains bound to the complex and localizes between the 2 core subunits UQCRC1/QCR1 and UQCRC2/QCR2. [2Fe-2S] cluster is required as a cofactor. Proteolytic processing is necessary for the correct insertion of UQCRFS1 in the complex III dimer. Several fragments are generated during UQCRFS1 insertion, most probably due to the endogenous matrix-processing peptidase (MPP) activity of the 2 core protein subunits UQCRC1/QCR1 and UQCRC2/QCR2, which are homologous to the 2 mitochondrial-processing peptidase (MPP) subunits beta-MPP and alpha-MPP respectively. The action of the protease is also necessary for the clearance of the UQCRFS1 fragments.

The protein resides in the mitochondrion inner membrane. It catalyses the reaction a quinol + 2 Fe(III)-[cytochrome c](out) = a quinone + 2 Fe(II)-[cytochrome c](out) + 2 H(+)(out). Its function is as follows. Component of the ubiquinol-cytochrome c oxidoreductase, a multisubunit transmembrane complex that is part of the mitochondrial electron transport chain which drives oxidative phosphorylation. The respiratory chain contains 3 multisubunit complexes succinate dehydrogenase (complex II, CII), ubiquinol-cytochrome c oxidoreductase (cytochrome b-c1 complex, complex III, CIII) and cytochrome c oxidase (complex IV, CIV), that cooperate to transfer electrons derived from NADH and succinate to molecular oxygen, creating an electrochemical gradient over the inner membrane that drives transmembrane transport and the ATP synthase. The cytochrome b-c1 complex catalyzes electron transfer from ubiquinol to cytochrome c, linking this redox reaction to translocation of protons across the mitochondrial inner membrane, with protons being carried across the membrane as hydrogens on the quinol. In the process called Q cycle, 2 protons are consumed from the matrix, 4 protons are released into the intermembrane space and 2 electrons are passed to cytochrome c. The Rieske protein is a catalytic core subunit containing a [2Fe-2S] iron-sulfur cluster. It cycles between 2 conformational states during catalysis to transfer electrons from the quinol bound in the Q(0) site in cytochrome b to cytochrome c1. Incorporation of UQCRFS1 is the penultimate step in complex III assembly. Component of the ubiquinol-cytochrome c oxidoreductase (cytochrome b-c1 complex, complex III, CIII). UQCRFS1 undergoes proteolytic processing once it is incorporated in the complex III dimer. One of the fragments, called subunit 9, corresponds to its mitochondrial targeting sequence (MTS). The proteolytic processing is necessary for the correct insertion of UQCRFS1 in the complex III dimer, but the persistence of UQCRFS1-derived fragments may prevent newly imported UQCRFS1 to be processed and assembled into complex III and is detrimental for the complex III structure and function. This chain is Cytochrome b-c1 complex subunit Rieske, mitochondrial (UQCRFS1), found in Bos taurus (Bovine).